The sequence spans 439 residues: MKITVHSSKAVKPEYGACGLAPGCTADVVPLTVLDKANFDTYISVIYAFHAPAPPNAVLEAGLGRALVDYREWAGRLGVDASGGRAILLNDAGARFVEATADVALDSVMPLKPTSEVLSLHPSGDDGPEELMLIQVTRFACGSLVVGFTTQHIVSDGRSTGNFFVAWSQATRGAAIDPVPVHDRASFFHPREPLHVEYEHRGVEFKPCEKAHDVVCGADGDEDEVVVNKVHFSREFISKLKAHASAGAPRPCSTLQCVVAHLWRSMTMARGLDGGETTSVAIAVDGRARMSPQVPDGYTGNVILWARPTTTAGELVTRPVKHAVELISREVARINDGYFKSFIDFANSGAVEKERLVATADAADMVLSPNIEVDSWLRIPFYDMDFGGGRPFFFMPSYLPVEGLLILLPSFLGDGSVDAYVPLFSRDMNTFKNCCYSLD.

Active-site proton acceptor residues include His-152 and Asp-385.

The protein belongs to the plant acyltransferase family. In terms of assembly, monomer.

The enzyme catalyses 4-coumaroyl-CoA + agmatine = N-(4-guanidinobutyl)-4-hydroxycinnamamide + CoA + H(+). With respect to regulation, inhibited by DEPC. Completely inhibited by ZnSO(4), strongly inhibited by CuSO(4), partially inhibited by MnCl(2). Unaffected by MgCl(2) or CaCl(2). Its function is as follows. Involved in the synthesis of hordatines (antifungal hydroxycinnamoylagmatine derivatives). Specific for agmatine as the acyl acceptor, inactive towards tyramine and putrescine. Has activity with the acyl donors 4-coumaroyl-CoA, cinnamoyl-CoA, caffeoyl-CoA, feruloyl-CoA, and to a lesser extent sinapoyl-CoA. This Hordeum vulgare (Barley) protein is Agmatine coumaroyltransferase-1 (ACT-1).